The chain runs to 241 residues: ATP-dependent dethiobiotin synthetase BioD (241 aa).

13–18 lines the ATP pocket; sequence DIGKTV. Thr17 lines the Mg(2+) pocket. Residue Lys38 is part of the active site. Residue Ser42 participates in substrate binding. Residues Asp55, 116 to 119, and 180 to 181 contribute to the ATP site; these read EGSG and NK. Residues Asp55 and Glu116 each contribute to the Mg(2+) site.

The protein belongs to the dethiobiotin synthetase family. In terms of assembly, homodimer. It depends on Mg(2+) as a cofactor.

The protein resides in the cytoplasm. It catalyses the reaction (7R,8S)-7,8-diammoniononanoate + CO2 + ATP = (4R,5S)-dethiobiotin + ADP + phosphate + 3 H(+). The protein operates within cofactor biosynthesis; biotin biosynthesis; biotin from 7,8-diaminononanoate: step 1/2. Functionally, catalyzes a mechanistically unusual reaction, the ATP-dependent insertion of CO2 between the N7 and N8 nitrogen atoms of 7,8-diaminopelargonic acid (DAPA, also called 7,8-diammoniononanoate) to form a ureido ring. The protein is ATP-dependent dethiobiotin synthetase BioD of Clostridium kluyveri (strain NBRC 12016).